The sequence spans 920 residues: Nonribosomal peptide synthetase atrA (920 aa).

An adenylation (A) domain region spans residues 13 to 428 (AAAQERCGRV…AGRLKETMII (416 aa)). The region spanning 558-637 (PPKDELERSL…ELSAALHDLQ (80 aa)) is the Carrier domain. Ser595 bears the O-(pantetheine 4'-phosphoryl)serine mark. The tract at residues 656 to 905 (PLWLIHPGVG…YTMLAPEHVF (250 aa)) is thioesterase (TE) domain.

This sequence belongs to the NRP synthetase family.

The catalysed reaction is 2 3-(4-hydroxyphenyl)pyruvate + 2 ATP = atromentin + 2 AMP + 2 diphosphate + H(+). Its function is as follows. Nonribosomal peptide synthetase that mediates the biosynthesis of atromentin. AtrA first activates 4-hydroxyphenylpyruvate (HPPA) through its A domain to AMP-HPPA. The HPPA unit is then loaded to the T domain and eventually transferred to the TE domain. Another HPPA unit is then loaded onto the T domain. The TE domain then catalyzes the condensation of the two HPPA units and the release of atromentin via cyclization. In Aspergillus terreus (strain NIH 2624 / FGSC A1156), this protein is Nonribosomal peptide synthetase atrA.